A 109-amino-acid chain; its full sequence is Elongin-C (109 aa).

Belongs to the SKP1 family.

Its subcellular location is the nucleus. SIII, also known as elongin, is a general transcription elongation factor that increases the RNA polymerase II transcription elongation past template-encoded arresting sites. Subunit A is transcriptionally active and its transcription activity is strongly enhanced by binding to the dimeric complex of the SIII regulatory subunits B and C (elongin BC complex). Its function is as follows. The elongin BC complex seems to be involved as an adapter protein in the proteasomal degradation of target proteins via different E3 ubiquitin ligase complexes. This chain is Elongin-C (tceb1), found in Dictyostelium discoideum (Social amoeba).